The sequence spans 132 residues: Small ribosomal subunit protein uS8 (132 aa).

Belongs to the universal ribosomal protein uS8 family. In terms of assembly, part of the 30S ribosomal subunit. Contacts proteins S5 and S12.

In terms of biological role, one of the primary rRNA binding proteins, it binds directly to 16S rRNA central domain where it helps coordinate assembly of the platform of the 30S subunit. This is Small ribosomal subunit protein uS8 from Streptomyces griseus subsp. griseus (strain JCM 4626 / CBS 651.72 / NBRC 13350 / KCC S-0626 / ISP 5235).